Consider the following 218-residue polypeptide: Ras-related protein RABA5e (218 aa).

19–26 (GDSAVGKS) is a binding site for GTP. The Effector region signature appears at 41 to 49 (SKATIGVEF). GTP contacts are provided by residues 67–71 (DTAGQ), 125–128 (NKCD), and 155–156 (SA). S-geranylgeranyl cysteine attachment occurs at residues C214 and C215. C215 is modified (cysteine methyl ester). Positions 216–218 (SST) are cleaved as a propeptide — removed in mature form.

This sequence belongs to the small GTPase superfamily. Rab family.

It localises to the cell membrane. In terms of biological role, intracellular vesicle trafficking and protein transport. In Arabidopsis thaliana (Mouse-ear cress), this protein is Ras-related protein RABA5e (RABA5E).